The sequence spans 248 residues: PF03932 family protein CutC (248 aa).

The protein belongs to the CutC family. Homodimer.

It localises to the cytoplasm. This Escherichia coli O45:K1 (strain S88 / ExPEC) protein is PF03932 family protein CutC.